The following is a 154-amino-acid chain: SsrA-binding protein (154 aa).

Belongs to the SmpB family.

The protein localises to the cytoplasm. In terms of biological role, required for rescue of stalled ribosomes mediated by trans-translation. Binds to transfer-messenger RNA (tmRNA), required for stable association of tmRNA with ribosomes. tmRNA and SmpB together mimic tRNA shape, replacing the anticodon stem-loop with SmpB. tmRNA is encoded by the ssrA gene; the 2 termini fold to resemble tRNA(Ala) and it encodes a 'tag peptide', a short internal open reading frame. During trans-translation Ala-aminoacylated tmRNA acts like a tRNA, entering the A-site of stalled ribosomes, displacing the stalled mRNA. The ribosome then switches to translate the ORF on the tmRNA; the nascent peptide is terminated with the 'tag peptide' encoded by the tmRNA and targeted for degradation. The ribosome is freed to recommence translation, which seems to be the essential function of trans-translation. This Ruminiclostridium cellulolyticum (strain ATCC 35319 / DSM 5812 / JCM 6584 / H10) (Clostridium cellulolyticum) protein is SsrA-binding protein.